The primary structure comprises 161 residues: Cap-associated protein CAF20 (161 aa).

Over residues 52 to 72 (HFGRRRSSHHHGRPKIKHNKP) the composition is skewed to basic residues. Positions 52–108 (HFGRRRSSHHHGRPKIKHNKPKVTTDSDGWCTFEAKKKGSGEDDEEETETTPTSTVP) are disordered. Ser78 and Ser91 each carry phosphoserine. Phosphothreonine occurs at positions 99, 101, and 102. At Ser154 the chain carries Phosphoserine.

The protein belongs to the CAF20 family. As to quaternary structure, interacts with TIF45. Post-translationally, phosphorylated by casein kinase II complex (CK2).

The protein localises to the cytoplasm. In terms of biological role, acts as an inhibitor of cap-dependent translation. Competes with eIF4G1/TIF4631 and EAP1 for binding to eIF4E/TIF45 and interferes with the formation of the eIF4F complex, inhibiting translation and stabilizing mRNA. Binding affinity for eIF4E/TIF45 is 10-fold less than that of eIF4G1/TIF4631. Required for induction of pseudohyphal growth in response to nitrogen limitation, probably by regulating STE12 translation. The sequence is that of Cap-associated protein CAF20 (CAF20) from Saccharomyces cerevisiae (strain ATCC 204508 / S288c) (Baker's yeast).